We begin with the raw amino-acid sequence, 656 residues long: L-type lectin-domain containing receptor kinase S.1 (656 aa).

Residues 1–29 (MSWQWRRRQWPSPLLLILIVLHLVSSSSA) form the signal peptide. Positions 30-273 (IDFLYNSFSS…ARRILAWSLS (244 aa)) are legume-lectin like. The Extracellular portion of the chain corresponds to 30–304 (IDFLYNSFSS…SSSLSTGAIA (275 aa)). Residues N42, N63, N121, N139, N191, N219, N282, and N293 are each glycosylated (N-linked (GlcNAc...) asparagine). Residues 305 to 325 (GIVIGCVVFVALIGFGGYLIW) traverse the membrane as a helical segment. Over 326–656 (KKLMREEEEE…AAADSTAAHA (331 aa)) the chain is Cytoplasmic. The region spanning 361-639 (FSNDRLLGSG…LLGSPQEDLL (279 aa)) is the Protein kinase domain. ATP contacts are provided by residues 367-375 (LGSGGFGKV) and K389. The Proton acceptor role is filled by D485.

The protein in the C-terminal section; belongs to the protein kinase superfamily. Ser/Thr protein kinase family. It in the N-terminal section; belongs to the leguminous lectin family.

The protein resides in the cell membrane. It catalyses the reaction L-seryl-[protein] + ATP = O-phospho-L-seryl-[protein] + ADP + H(+). It carries out the reaction L-threonyl-[protein] + ATP = O-phospho-L-threonyl-[protein] + ADP + H(+). Functionally, involved in resistance response to the pathogenic oomycetes Phytophthora infestans and Phytophthora capsici and to the pathogenic bacteria Pseudomonas syringae. This is L-type lectin-domain containing receptor kinase S.1 from Arabidopsis thaliana (Mouse-ear cress).